The sequence spans 301 residues: Probable alpha-L-glutamate ligase 2 (301 aa).

Residues 104–287 enclose the ATP-grasp domain; it reads LQLLSRKSIG…VADKIIQFIE (184 aa). ATP is bound by residues Lys-141, 178–179, Asp-187, and 211–213; these read EY and RSN. Residues Asp-248, Glu-260, and Asn-262 each coordinate Mg(2+). Mn(2+) contacts are provided by Asp-248, Glu-260, and Asn-262.

The protein belongs to the RimK family. Mg(2+) serves as cofactor. It depends on Mn(2+) as a cofactor.

The polypeptide is Probable alpha-L-glutamate ligase 2 (Shewanella denitrificans (strain OS217 / ATCC BAA-1090 / DSM 15013)).